The following is a 108-amino-acid chain: Hydrogenase expression/formation protein HupN (108 aa).

Positions Arg-88–Pro-108 are disordered.

This sequence belongs to the HupF/HypC family.

The protein is Hydrogenase expression/formation protein HupN (hupN) of Azotobacter chroococcum mcd 1.